The sequence spans 500 residues: NAD(P)H-quinone oxidoreductase chain 4, chloroplastic (500 aa).

Helical transmembrane passes span 4-24, 35-55, 87-107, 111-131, 134-154, 167-187, 211-231, 242-262, 274-294, 313-333, 334-354, 386-406, 417-437, and 462-482; these read FPWLTILVVLPIFAGSLIFFL, YTIAICLLEFLIMTYAFCYHF, LGSILLTGFITTLATLAAWPV, SQLFYFLMLAMYSGQIGLFSS, LLLFFIMWELELIPVYLLLSM, FILYTAGGSIFFLIGVLGMGL, ILLYFGFLIAYAVKLPIIPLH, HYSTCMLLAGILLKMGAYGLI, YLFSPWLVIIGAVQIIYAALT, MGFIIIGIGSITNIGLNGAIL, QILSHGFIGATLFFLAGTACD, LALPGMSGFVAELVVFFGLIT, LITFVMAIGMILTPIYLLSML, and LFLLICIFLPVIGIGIYPDFV.

The protein belongs to the complex I subunit 4 family.

It localises to the plastid. Its subcellular location is the chloroplast thylakoid membrane. The enzyme catalyses a plastoquinone + NADH + (n+1) H(+)(in) = a plastoquinol + NAD(+) + n H(+)(out). The catalysed reaction is a plastoquinone + NADPH + (n+1) H(+)(in) = a plastoquinol + NADP(+) + n H(+)(out). The protein is NAD(P)H-quinone oxidoreductase chain 4, chloroplastic of Saccharum hybrid (Sugarcane).